We begin with the raw amino-acid sequence, 226 residues long: UPF0758 protein SUB0843 (226 aa).

The MPN domain occupies glutamine 103 to isoleucine 225. Histidine 174, histidine 176, and aspartate 187 together coordinate Zn(2+). The JAMM motif motif lies at histidine 174–aspartate 187.

The protein belongs to the UPF0758 family.

This is UPF0758 protein SUB0843 from Streptococcus uberis (strain ATCC BAA-854 / 0140J).